A 120-amino-acid chain; its full sequence is MVKMVIVVRSDIKMGKGKMAAQVAHAAVTLVISIINSNNSRWKEWLNEWLQQGQPKIVVKANSLDEIILRSKKAETMNLPFSIIEDAGKTQLEPGTITCLGIGPAPENLIDPITGDLKLL.

This sequence belongs to the PTH2 family.

The protein localises to the cytoplasm. The catalysed reaction is an N-acyl-L-alpha-aminoacyl-tRNA + H2O = an N-acyl-L-amino acid + a tRNA + H(+). Its function is as follows. The natural substrate for this enzyme may be peptidyl-tRNAs which drop off the ribosome during protein synthesis. This Saccharolobus islandicus (strain Y.N.15.51 / Yellowstone #2) (Sulfolobus islandicus) protein is Peptidyl-tRNA hydrolase.